Consider the following 217-residue polypeptide: Probable transaldolase (217 aa).

Lys85 serves as the catalytic Schiff-base intermediate with substrate.

This sequence belongs to the transaldolase family. Type 3B subfamily.

It is found in the cytoplasm. The enzyme catalyses D-sedoheptulose 7-phosphate + D-glyceraldehyde 3-phosphate = D-erythrose 4-phosphate + beta-D-fructose 6-phosphate. Its pathway is carbohydrate degradation; pentose phosphate pathway; D-glyceraldehyde 3-phosphate and beta-D-fructose 6-phosphate from D-ribose 5-phosphate and D-xylulose 5-phosphate (non-oxidative stage): step 2/3. Transaldolase is important for the balance of metabolites in the pentose-phosphate pathway. The sequence is that of Probable transaldolase from Brachyspira hyodysenteriae (strain ATCC 49526 / WA1).